The sequence spans 229 residues: Ras-related protein Rab-33B (229 aa).

Residues Asn43, Val44, Gly45, Lys46, Thr47, Cys48, Thr62, and Thr65 each coordinate GTP. Thr47 serves as a coordination point for Mg(2+). The Switch 1 motif lies at 56–68 (GRFPDRTEATIGV). Mg(2+) is bound by residues Thr65 and Asp88. Residues 89–108 (TAGQERFRKSMVQHYYRNVH) carry the Switch 2 motif. Residues Gly91, Asn148, Lys149, Asp151, Ala179, and Lys180 each coordinate GTP. Residues Cys227 and Cys229 are each lipidated (S-geranylgeranyl cysteine). The residue at position 229 (Cys229) is a Cysteine methyl ester.

Belongs to the small GTPase superfamily. Rab family. In terms of assembly, interacts (GTP- and GDP-bound forms) with ATG16L1; the complex consists of a tetramer where two RAB33B molecules bind independently one molecule of the ATG16L1 homodimer; the interaction promotes ATG12-ATG5-ATG16L1 complex recruitment to phagophores. Interacts with ATG16L2; however interaction is approximately hundred times lower than for ATG16L1. Interacts with RIC1 (via C-terminus domain); the interaction is direct with a preference for RAB33B-GTP. Interacts with RGP1. The cofactor is Mg(2+). Post-translationally, prenylated. As to expression, ubiquitous.

The protein localises to the golgi apparatus membrane. It localises to the golgi apparatus. Its subcellular location is the cis-Golgi network. The protein resides in the preautophagosomal structure membrane. The catalysed reaction is GTP + H2O = GDP + phosphate + H(+). Its activity is regulated as follows. Regulated by guanine nucleotide exchange factors (GEFs) which promote the exchange of bound GDP for free GTP. Regulated by GTPase activating proteins (GAPs) such as SGSM2 which increase the GTP hydrolysis activity. Inhibited by GDP dissociation inhibitors (GDIs). Functionally, the small GTPases Rab are key regulators of intracellular membrane trafficking, from the formation of transport vesicles to their fusion with membranes. Rabs cycle between an inactive GDP-bound form and an active GTP-bound form that is able to recruit to membranes different sets of downstream effectors directly responsible for vesicle formation, movement, tethering and fusion. RAB33B acts, in coordination with RAB6A, to regulate intra-Golgi retrograde trafficking. Participates in autophagosome formation by recruiting the ATG12-ATG5-ATG16L1 complex to phagophores, probably in a nucleotide-independent manner. This chain is Ras-related protein Rab-33B, found in Mus musculus (Mouse).